The chain runs to 500 residues: Beta-glucosidase 30 (500 aa).

The N-terminal stretch at 1–25 is a signal peptide; it reads MGIRMGRRLLFTLFLGALFCNGVYA. Glutamine 46 provides a ligand contact to a beta-D-glucoside. Asparagine 63 and asparagine 114 each carry an N-linked (GlcNAc...) asparagine glycan. A beta-D-glucoside is bound by residues histidine 149 and 194–195; that span reads NE. The active-site Proton donor is glutamate 195. Cysteines 214 and 222 form a disulfide. Tyrosine 338 contributes to the a beta-D-glucoside binding site. Asparagine 363 is a glycosylation site (N-linked (GlcNAc...) asparagine). Glutamate 409 is a binding site for a beta-D-glucoside. Residue glutamate 409 is the Nucleophile of the active site. Asparagine 416 and asparagine 417 each carry an N-linked (GlcNAc...) asparagine glycan. A beta-D-glucoside contacts are provided by residues tryptophan 456, 463–464, and phenylalanine 472; that span reads EW.

This sequence belongs to the glycosyl hydrolase 1 family.

It carries out the reaction Hydrolysis of terminal, non-reducing beta-D-glucosyl residues with release of beta-D-glucose.. In Oryza sativa subsp. japonica (Rice), this protein is Beta-glucosidase 30 (BGLU30).